Reading from the N-terminus, the 444-residue chain is uncharacterized protein (444 aa).

The next 12 membrane-spanning stretches (helical) occupy residues 2–22, 24–44, 52–72, 106–126, 134–154, 174–194, 228–248, 261–281, 305–325, 343–363, 377–397, and 424–444; these read PILI…KVKL, TFVS…MDIN, TGIG…AMLG, FIIG…PIVY, MPFL…HGFL, VLLF…PLFN, FAIS…ATIF, IIEF…LALY, IAMM…LIDG, LFVA…ATVA, AGSV…VIAC, and LLTT…GLVM.

Belongs to the GntP permease family.

Its subcellular location is the cell membrane. This is an uncharacterized protein from Bacillus subtilis (strain 168).